We begin with the raw amino-acid sequence, 261 residues long: Probable septum site-determining protein MinC (261 aa).

It belongs to the MinC family. As to quaternary structure, interacts with MinD and FtsZ.

Functionally, cell division inhibitor that blocks the formation of polar Z ring septums. Rapidly oscillates between the poles of the cell to destabilize FtsZ filaments that have formed before they mature into polar Z rings. Prevents FtsZ polymerization. This chain is Probable septum site-determining protein MinC, found in Burkholderia cenocepacia (strain ATCC BAA-245 / DSM 16553 / LMG 16656 / NCTC 13227 / J2315 / CF5610) (Burkholderia cepacia (strain J2315)).